A 215-amino-acid chain; its full sequence is MASATLTAWIKMPSFLKKILKLRGRRQEDESRSRTLSDSSMLSCRVNQLTSEGTEAGSTTPSTLPKDQALLIEPKVRAKEKSQHRRPKIIDQVRRVESLGEQASQRQKHMLETLINKIYTGPLGEELVQTLYLRIWAMEETPESLKILQMREDIRDQVLKMKTERWLRTLIRGEKTKLKDFQKRYEEVHPYLMKEKVEQVIMEEAWSLAAHIVQE.

Residues 12-34 (MPSFLKKILKLRGRRQEDESRSR) form a disordered region. Residues 15–22 (FLKKILKL) are involved in self-degradation and in host STAT1 degradation.

This sequence belongs to the respirovirus protein C family. In terms of assembly, the different isoforms interact (via C-terminus) with unphosphorylated and phosphorylated human STAT1 (via N-terminus), favoring the formation of parallel STAT1 homodimers. The different isoforms do not interact with host STAT2. C protein interacts with L protein; this interaction has an inhibitory effect on viral transcription and replication. Protein Y2 is produced not only by alternative initiation, but also by proteolytic cleavage of C'. Only alternative initiation is detected in vitro, whereas in vivo cleavage seems to be predominant.

The protein localises to the host cytoplasm. The different products prevent the establishment of cellular antiviral state by blocking the interferon-alpha/beta (IFN-alpha/beta) and IFN-gamma signaling pathways. They inhibit IFN-alpha/beta induced tyrosine phosphorylation of STAT1 and STAT2. Blocking the IFN-alpha/beta pathway requires binding to STAT1 in the cytoplasm. They inhibit IFN-gamma induced serine phosphorylation of STAT1. Block the IFN-gamma pathway by binding to and stabilizing the parallel form of the STAT1 dimer, further inducing high-molecular-weight complex formation and inhibition of transcription by IFN-gamma. May also have a role in preventing the cell to enter apoptosis. Modulate regulation of viral transcription and replication. Overexpression inhibits the viral RNA polymerase. The absence of all C', C and Y2 proteins leads to viral delayed growth. Plays an important role in virion particles release. Modulates virion shape. This Cavia cutleri (Guinea pig) protein is Protein C' (P/V/C).